The primary structure comprises 776 residues: MQHFSRTFLAASIATALFAPYAQAEAILNNSVQEMPTTDQCLVDAEKNDANAEIVIQADNLQAINGDKAIYSGDVEVTQGNKKITAESVTLHQQENIVVAEGNVTFNDGEVKASSSKVTNNMTSETFSLENTEYQFLCQQGRGQAAYIAKTGQAVYELEDGSITSCPADDNAWRLVASSIEVDQDEETATFYHPRFEVLDVPVFYAPYLTLPIGNTRKTGFLFPSVNYGSSDGLEIEVPFYWNIAPNYDLTLTTLYMQQRGVKQDADFRYLSDGWGSGELKGEYLPGDEKYNDEDRWGYQYKHDGIINKQWLVSLDYSQVSDIDYFRDLSSDLGNREDGQLMQQGKVAYRSDFWDMSLQVRDFQILLQDNNQPYRLLPQVKFNFYTPLLGNYLNFDVKSELTQFDIQDASKPNALRAHVEPGLTIPLSTSWATWTTEARLLATYYQQDLDRLTDPTLKSQLDETVARVIPEYRSHARIYLEREAKLFEGYTQSLEPQIQYLYVPEEEQGNIYNYDTTLLQTDYYGLFRSRKYSSIDKIAAANQLSYGASTRFFDDEYKERLNISFGQIYYIDKKTKLTGNQEETSNYSSWAVETDFNYEDFLFYHGGIQYDIDLNAMQLANSTLEYQFTDGFIQGNYRYVTKDYIEDTISFDELDKITRKGISQAGIVGAYNINRHWSASGQYYYDLTEEIDLEWMASLRYQSDCWYIGFTYTNQLVKWRNDVVGGDSNNPVYDTNISVNFGIQGFATKNKAETAAKELDSTDNAITYGRPFYLNN.

A signal peptide spans 1-24; that stretch reads MQHFSRTFLAASIATALFAPYAQA.

The protein belongs to the LptD family. In terms of assembly, component of the lipopolysaccharide transport and assembly complex. Interacts with LptE and LptA.

It localises to the cell outer membrane. Its function is as follows. Together with LptE, is involved in the assembly of lipopolysaccharide (LPS) at the surface of the outer membrane. The sequence is that of LPS-assembly protein LptD from Vibrio vulnificus (strain YJ016).